A 395-amino-acid polypeptide reads, in one-letter code: Axin-like protein 1 (395 aa).

The 129-residue stretch at 4-132 (RSKTFSDRIL…TTTADVSNTW (129 aa)) folds into the RGS domain. Positions 190–230 (QETKNSSETEEEKKKERSADPYGSDGFAPPPQSTQTHTLRN) are disordered. Residues 194–208 (NSSETEEEKKKERSA) show a composition bias toward basic and acidic residues. Positions 301-386 (EIQKLTVELR…RITAICRMCP (86 aa)) constitute a DIX domain.

In terms of assembly, interacts with bar-1, dsh-2, gsk-3, and mig-5.

In terms of biological role, works in parallel with pry-1 in negatively regulating bar-1 signaling in vulval precursor cells and Q neuroblasts. Shown to have a role in excretory cell development. The sequence is that of Axin-like protein 1 (axl-1) from Caenorhabditis briggsae.